Consider the following 336-residue polypeptide: Gibberellin 2-beta-dioxygenase 7 (336 aa).

The 101-residue stretch at 191–291 folds into the Fe2OG dioxygenase domain; the sequence is LENSFLRLNK…RMSIAFFVCP (101 aa). The Fe cation site is built by His-216, Asp-218, and His-272. The active site involves Arg-282. Arg-282 is a 2-oxoglutarate binding site.

Belongs to the iron/ascorbate-dependent oxidoreductase family. GA2OX subfamily. Fe(2+) is required as a cofactor.

The enzyme catalyses gibberellin A1 + 2-oxoglutarate + O2 = gibberellin A8 + succinate + CO2. It participates in plant hormone biosynthesis; gibberellin biosynthesis. In terms of biological role, catalyzes the 2-beta-hydroxylation of gibberellins (GA) precursors, rendering them unable to be converted to active GAs. Hydroxylates the C20-GA GA12 and GA53, but is not active on C19-GAs, like GA1, GA4, GA9 and GA20. In Arabidopsis thaliana (Mouse-ear cress), this protein is Gibberellin 2-beta-dioxygenase 7 (GA2OX7).